Consider the following 347-residue polypeptide: Probable ribonucleotide transport ATP-binding protein mkl (347 aa).

The region spanning 16-252 (IEVKGLTKSF…DEPVVRQFLN (237 aa)) is the ABC transporter domain. Residue 48–55 (GPSGTGKS) coordinates ATP.

Belongs to the ABC transporter superfamily.

Its function is as follows. Not known, could be involved in the transport of ribonucleotides. The polypeptide is Probable ribonucleotide transport ATP-binding protein mkl (mkl) (Mycobacterium leprae (strain TN)).